Consider the following 72-residue polypeptide: Protein CYSTEINE-RICH TRANSMEMBRANE MODULE 9 (72 aa).

Residues methionine 1–tyrosine 22 are compositionally biased toward polar residues. Residues methionine 1–glutamate 46 form a disordered region. The chain crosses the membrane as a helical span at residues serine 49–cysteine 65.

Belongs to the CYSTM1 family. Heterodimers. Interacts with WIH1/CYSTM13. As to expression, mostly expressed in roots and flowers and, to a lower extent, in stems, siliques and leaves.

Its subcellular location is the cell membrane. It localises to the nucleus. Its function is as follows. Involved in resistance to abiotic stress. The sequence is that of Protein CYSTEINE-RICH TRANSMEMBRANE MODULE 9 from Arabidopsis thaliana (Mouse-ear cress).